The sequence spans 247 residues: Potassium channel Ftrac_2467 (247 aa).

The next 6 membrane-spanning stretches (helical) occupy residues 23 to 44, 56 to 78, 89 to 117, 142 to 165, 187 to 210, and 215 to 237; these read TRIETFSDAVFALAITLLVLSS, SMRDVIPFAICVALIIVIWYQHY, KVTILLNTILLFVLLVYVYPLKFLARFLS, LKLLMVNYGLGAFAIFLVFSLMYW, SIIANLLMCSVPLLSLIITLIDPW, and TTILSGFLYFLYVPIMIVFGRIT. The short motif at 24 to 30 is the RxxxFSD motif element; that stretch reads RIETFSD.

Belongs to the TMEM175 family. In terms of assembly, homotetramer.

It localises to the cell membrane. It carries out the reaction K(+)(in) = K(+)(out). Potassium channel; forms a potassium-permeable leak-like channel with weak selectivity for potassium. The channel is permeable for K(+), Rb(+) and Cs(+). The sequence is that of Potassium channel Ftrac_2467 from Marivirga tractuosa (strain ATCC 23168 / DSM 4126 / NBRC 15989 / NCIMB 1408 / VKM B-1430 / H-43) (Microscilla tractuosa).